The primary structure comprises 380 residues: Lipid-A-disaccharide synthase (380 aa).

The protein belongs to the LpxB family.

It catalyses the reaction a lipid X + a UDP-2-N,3-O-bis[(3R)-3-hydroxyacyl]-alpha-D-glucosamine = a lipid A disaccharide + UDP + H(+). The protein operates within bacterial outer membrane biogenesis; LPS lipid A biosynthesis. Functionally, condensation of UDP-2,3-diacylglucosamine and 2,3-diacylglucosamine-1-phosphate to form lipid A disaccharide, a precursor of lipid A, a phosphorylated glycolipid that anchors the lipopolysaccharide to the outer membrane of the cell. The sequence is that of Lipid-A-disaccharide synthase from Pseudomonas syringae pv. syringae (strain B728a).